Reading from the N-terminus, the 638-residue chain is Sorting nexin-41 (638 aa).

Positions 1-14 (MDSDTSPNPFASSP) are enriched in low complexity. A disordered region spans residues 1–69 (MDSDTSPNPF…MGATVPGPKP (69 aa)). A compositionally biased stretch (pro residues) spans 15-30 (PSSPSPRPSLPPPVPR). In terms of domain architecture, PX spans 84–201 (GEQVHIVDAL…HRFLEEDVSW (118 aa)). R118, S120, K144, and R168 together coordinate a 1,2-diacyl-sn-glycero-3-phospho-(1D-myo-inositol-3-phosphate). 3 disordered regions span residues 215-239 (KNPL…SEAP), 408-432 (LERG…RERA), and 545-638 (PHPN…LGPL). Residues 225–239 (PTFQPTTPTSPSEAP) show a composition bias toward low complexity. The span at 423–432 (EAARDERERA) shows a compositional bias: basic and acidic residues. A compositionally biased stretch (low complexity) spans 552–562 (QTQTQVQSQQS). Residues 585–601 (MKNEIERVEIEIADKPL) are compositionally biased toward basic and acidic residues.

Belongs to the sorting nexin family.

The protein resides in the endosome membrane. Its subcellular location is the endomembrane system. In terms of biological role, may be required for cytoplasm to vacuole transport (Cvt) and pexophagy. This chain is Sorting nexin-41 (SNX41), found in Cryptococcus neoformans var. neoformans serotype D (strain B-3501A) (Filobasidiella neoformans).